The primary structure comprises 835 residues: Phenylalanine--tRNA ligase beta subunit (835 aa).

The tRNA-binding domain occupies 44-158 (GPVDGPLTVG…LPGADGADVL (115 aa)). The B5 domain occupies 414-493 (WSLPPIRIAV…RLEGLEVIRS (80 aa)). Mg(2+) is bound by residues Asp-471, Asp-477, Glu-480, and Glu-481. One can recognise an FDX-ACB domain in the interval 741–834 (SPFPAVLQDV…AAERVGATLR (94 aa)).

It belongs to the phenylalanyl-tRNA synthetase beta subunit family. Type 1 subfamily. In terms of assembly, tetramer of two alpha and two beta subunits. Mg(2+) is required as a cofactor.

The protein resides in the cytoplasm. It carries out the reaction tRNA(Phe) + L-phenylalanine + ATP = L-phenylalanyl-tRNA(Phe) + AMP + diphosphate + H(+). In Mycobacterium leprae (strain TN), this protein is Phenylalanine--tRNA ligase beta subunit.